We begin with the raw amino-acid sequence, 488 residues long: Putative BPI/LBP family protein At1g04970 (488 aa).

The signal sequence occupies residues 1–24 (MDVGRCFLFLLLPSFFFLPSQTQS). N-linked (GlcNAc...) asparagine glycans are attached at residues Asn79, Asn109, Asn231, Asn242, and Asn341.

Belongs to the BPI/LBP/Plunc superfamily. BPI/LBP (TC 1.C.40) family.

The protein is Putative BPI/LBP family protein At1g04970 of Arabidopsis thaliana (Mouse-ear cress).